A 484-amino-acid chain; its full sequence is Membrane-bound lytic murein transglycosylase F (484 aa).

The first 18 residues, 1–18 (MKGLLLRIIAAFALVLWA), serve as a signal peptide directing secretion. Residues 19 to 267 (IDMVFPWQQM…RIEEKYFNHF (249 aa)) form a non-LT domain region. Residues 268-484 (SQFDYVDMRQ…PLTDNQEKQE (217 aa)) form an LT domain region. Glutamate 312 is an active-site residue. The disordered stretch occupies residues 459–484 (ADNKDKPSETDENLPLPLTDNQEKQE).

It in the N-terminal section; belongs to the bacterial solute-binding protein 3 family. This sequence in the C-terminal section; belongs to the transglycosylase Slt family.

It is found in the cell outer membrane. It catalyses the reaction Exolytic cleavage of the (1-&gt;4)-beta-glycosidic linkage between N-acetylmuramic acid (MurNAc) and N-acetylglucosamine (GlcNAc) residues in peptidoglycan, from either the reducing or the non-reducing ends of the peptidoglycan chains, with concomitant formation of a 1,6-anhydrobond in the MurNAc residue.. Its function is as follows. Murein-degrading enzyme that degrades murein glycan strands and insoluble, high-molecular weight murein sacculi, with the concomitant formation of a 1,6-anhydromuramoyl product. Lytic transglycosylases (LTs) play an integral role in the metabolism of the peptidoglycan (PG) sacculus. Their lytic action creates space within the PG sacculus to allow for its expansion as well as for the insertion of various structures such as secretion systems and flagella. In Mannheimia succiniciproducens (strain KCTC 0769BP / MBEL55E), this protein is Membrane-bound lytic murein transglycosylase F.